A 209-amino-acid polypeptide reads, in one-letter code: Uracil phosphoribosyltransferase (209 aa).

5-phospho-alpha-D-ribose 1-diphosphate is bound by residues Arg-79, Arg-104, and 131-139 (DPMLATGGS). Uracil-binding positions include Ile-194 and 199–201 (GDA). Residue Asp-200 participates in 5-phospho-alpha-D-ribose 1-diphosphate binding.

This sequence belongs to the UPRTase family. The cofactor is Mg(2+).

The catalysed reaction is UMP + diphosphate = 5-phospho-alpha-D-ribose 1-diphosphate + uracil. It functions in the pathway pyrimidine metabolism; UMP biosynthesis via salvage pathway; UMP from uracil: step 1/1. Its activity is regulated as follows. Allosterically activated by GTP. Catalyzes the conversion of uracil and 5-phospho-alpha-D-ribose 1-diphosphate (PRPP) to UMP and diphosphate. This Exiguobacterium sibiricum (strain DSM 17290 / CCUG 55495 / CIP 109462 / JCM 13490 / 255-15) protein is Uracil phosphoribosyltransferase.